Reading from the N-terminus, the 274-residue chain is Trehalose transport system permease protein SugB (274 aa).

6 consecutive transmembrane segments (helical) span residues 8–28 (YWAV…LWIF), 70–90 (IGIG…AAYA), 102–122 (LIGA…TPLF), 137–157 (LILP…SAFF), 182–202 (VIVP…FIFA), and 239–259 (GSIA…VLIF). Residues 66–259 (LINSIGIGLI…IPIIVFVLIF (194 aa)) enclose the ABC transmembrane type-1 domain.

This sequence belongs to the binding-protein-dependent transport system permease family. The complex is composed of two ATP-binding proteins (SugC), two transmembrane proteins (Suga and SugB) and a solute-binding protein (LpqY).

It localises to the cell inner membrane. Its function is as follows. Part of the ABC transporter complex LpqY-SugA-SugB-SugC, which is highly specific for uptake of trehalose. Involved in the recycling of extracellular trehalose released from trehalose-containing molecules synthesized by M.tuberculosis. Trehalose uptake is essential for virulence. Probably responsible for the translocation of the substrate across the membrane. The polypeptide is Trehalose transport system permease protein SugB (sugB) (Mycobacterium tuberculosis (strain CDC 1551 / Oshkosh)).